A 232-amino-acid chain; its full sequence is Aspartate/glutamate leucyltransferase (232 aa).

This sequence belongs to the R-transferase family. Bpt subfamily.

Its subcellular location is the cytoplasm. The catalysed reaction is N-terminal L-glutamyl-[protein] + L-leucyl-tRNA(Leu) = N-terminal L-leucyl-L-glutamyl-[protein] + tRNA(Leu) + H(+). It catalyses the reaction N-terminal L-aspartyl-[protein] + L-leucyl-tRNA(Leu) = N-terminal L-leucyl-L-aspartyl-[protein] + tRNA(Leu) + H(+). Functions in the N-end rule pathway of protein degradation where it conjugates Leu from its aminoacyl-tRNA to the N-termini of proteins containing an N-terminal aspartate or glutamate. In Vibrio vulnificus (strain CMCP6), this protein is Aspartate/glutamate leucyltransferase.